The primary structure comprises 242 residues: Ribonuclease PH (242 aa).

Phosphate is bound by residues R87 and G125–R127.

It belongs to the RNase PH family. As to quaternary structure, homohexameric ring arranged as a trimer of dimers.

It catalyses the reaction tRNA(n+1) + phosphate = tRNA(n) + a ribonucleoside 5'-diphosphate. In terms of biological role, phosphorolytic 3'-5' exoribonuclease that plays an important role in tRNA 3'-end maturation. Removes nucleotide residues following the 3'-CCA terminus of tRNAs; can also add nucleotides to the ends of RNA molecules by using nucleoside diphosphates as substrates, but this may not be physiologically important. Probably plays a role in initiation of 16S rRNA degradation (leading to ribosome degradation) during starvation. This is Ribonuclease PH from Thermosynechococcus vestitus (strain NIES-2133 / IAM M-273 / BP-1).